Consider the following 73-residue polypeptide: Putative membrane protein insertion efficiency factor (73 aa).

This sequence belongs to the UPF0161 family.

Its subcellular location is the cell inner membrane. In terms of biological role, could be involved in insertion of integral membrane proteins into the membrane. The chain is Putative membrane protein insertion efficiency factor from Bacteroides fragilis (strain ATCC 25285 / DSM 2151 / CCUG 4856 / JCM 11019 / LMG 10263 / NCTC 9343 / Onslow / VPI 2553 / EN-2).